The sequence spans 447 residues: GA-binding protein subunit beta-2 (447 aa).

5 ANK repeats span residues 5–34 (DLGK…PFTT), 37–66 (LGTS…SRDA), 70–99 (VDRT…DVNA), 103–132 (LKMT…DVHA), and 136–166 (FDKS…QVNA). A Phosphoserine modification is found at Ser253. The stretch at 345–395 (EESKEGTERELLQQRLQEANRRAQEYRHQLLKKEQEAEQYRLRLEAMARQQ) forms a coiled coil. The disordered stretch occupies residues 418–447 (REMEERETEVTGAVGTAEPHTGVSMETVST).

In terms of assembly, heterotetramer of two alpha and two beta subunits. The C-terminal is necessary for the formation of a heterotetrameric GABP-alpha-2/beta-2 complex, and also facilitates homotypic dimerization. Interacts with ADGRB2.

It is found in the nucleus. May function as transcription factor capable of interacting with purine rich repeats (GA repeats). This is GA-binding protein subunit beta-2 (GABPB2) from Bos taurus (Bovine).